A 594-amino-acid polypeptide reads, in one-letter code: (-)-endo-fenchol synthase, chloroplastic (594 aa).

The transit peptide at 1–50 directs the protein to the chloroplast; sequence MSSLVMHVGIVNKPAITYLPTLSRRASNLHNVSSTRLQTSCSLQLDYKPV. 4 residues coordinate Mg(2+): D348, D352, D492, and E500. A DDXXD motif motif is present at residues 348-352; the sequence is DDIYD.

The protein belongs to the terpene synthase family. Tpsa subfamily. It depends on Mg(2+) as a cofactor. Mn(2+) serves as cofactor. As to expression, expressed at low levels in leaves.

The protein localises to the plastid. Its subcellular location is the chloroplast. It catalyses the reaction (2E)-geranyl diphosphate = alpha-pinene + diphosphate. The catalysed reaction is (2E)-geranyl diphosphate + H2O = (1S,2S,4R)-endo-fenchol + diphosphate. It carries out the reaction (2E)-geranyl diphosphate = limonene + diphosphate. The protein operates within secondary metabolite biosynthesis; terpenoid biosynthesis. In terms of biological role, monoterpene synthase involved in the biosynthesis of volatile compounds widely used in aromatherapy and folk medicine, and present in culinary herbs. Mediates the conversion of (2E)-geranyl diphosphate (GPP) into alpha fenchol, limonene and alpha-pinene and, as minor compounds, into beta-myrcene, alpha-terpinolene and alpha-phellandrene. The chain is (-)-endo-fenchol synthase, chloroplastic from Lavandula stoechas (Butterfly lavender).